A 250-amino-acid polypeptide reads, in one-letter code: DNA repair protein RecO (250 aa).

Belongs to the RecO family.

Its function is as follows. Involved in DNA repair and RecF pathway recombination. The sequence is that of DNA repair protein RecO from Lactobacillus helveticus (strain DPC 4571).